Reading from the N-terminus, the 81-residue chain is Sulfur carrier protein TusA (81 aa).

Cys-19 serves as the catalytic Cysteine persulfide intermediate.

It belongs to the sulfur carrier protein TusA family.

Its subcellular location is the cytoplasm. Sulfur carrier protein which probably makes part of a sulfur-relay system. The chain is Sulfur carrier protein TusA from Shewanella sediminis (strain HAW-EB3).